The sequence spans 421 residues: Putative leucine-rich repeat protein R380 (421 aa).

7 LRR repeats span residues 48-69 (YLEK…QYLP), 70-85 (KIKE…THIP), 89-110 (NLIK…NQSK), 111-129 (LLYL…IFLP), 130-150 (ECRE…NYFP), 151-172 (NLRI…SSLI), and 173-191 (ELNI…PQLV).

This is Putative leucine-rich repeat protein R380 from Acanthamoeba polyphaga (Amoeba).